The following is a 396-amino-acid chain: L-lactate dehydrogenase (396 aa).

Residues 1-380 enclose the FMN hydroxy acid dehydrogenase domain; the sequence is MIISAASDYR…SGDSLVQELG (380 aa). Y24 is a binding site for substrate. The FMN site is built by S106 and Q127. Y129 is a substrate binding site. T155 lines the FMN pocket. Residue R164 participates in substrate binding. K251 contributes to the FMN binding site. The Proton acceptor role is filled by H275. R278 serves as a coordination point for substrate. 306-330 contributes to the FMN binding site; sequence DSGIRNGLDVVRMIALGADTVLLGR.

The protein belongs to the FMN-dependent alpha-hydroxy acid dehydrogenase family. The cofactor is FMN.

Its subcellular location is the cell inner membrane. The enzyme catalyses (S)-lactate + A = pyruvate + AH2. In terms of biological role, catalyzes the conversion of L-lactate to pyruvate. Is coupled to the respiratory chain. The protein is L-lactate dehydrogenase of Salmonella choleraesuis (strain SC-B67).